The primary structure comprises 332 residues: 2,3-diketo-L-gulonate reductase (332 aa).

The active-site Proton donor is His-44. Residues 168 to 174, 224 to 225, and 304 to 306 each bind NAD(+); these read ITMVDMS, WK, and GHE.

It belongs to the LDH2/MDH2 oxidoreductase family. DlgD subfamily. Homodimer.

The protein resides in the cytoplasm. The catalysed reaction is 3-dehydro-L-gulonate + NAD(+) = 2,3-dioxo-L-gulonate + NADH + H(+). It catalyses the reaction 3-dehydro-L-gulonate + NADP(+) = 2,3-dioxo-L-gulonate + NADPH + H(+). Catalyzes the reduction of 2,3-diketo-L-gulonate in the presence of NADH, to form 3-keto-L-gulonate. This is 2,3-diketo-L-gulonate reductase from Escherichia coli O17:K52:H18 (strain UMN026 / ExPEC).